Reading from the N-terminus, the 1339-residue chain is Retrotransposon Gag-like protein 9 (1339 aa).

3 stretches are compositionally biased toward polar residues: residues 533-545, 679-693, and 700-711; these read TVPT…TQKT, SGTK…TTSG, and TRLSGPGATSTP. Disordered stretches follow at residues 533-555, 679-711, 845-864, 880-901, 982-1010, and 1078-1116; these read TVPT…PMST, SGTK…TSTP, GVMS…SRPQ, PATA…LSTL, ATSL…GAGS, and ATDS…PPKE. Residues 891–901 show a composition bias toward low complexity; sequence RSPASSTLSTL. The span at 1078–1106 shows a compositional bias: polar residues; that stretch reads ATDSGEASTSHTRFTAPGSKSTPHMTSTA.

The protein is Retrotransposon Gag-like protein 9 of Mus musculus (Mouse).